We begin with the raw amino-acid sequence, 321 residues long: Probable pectate lyase A (321 aa).

Positions 1–18 (MKFVATLIACGLSGLALA) are cleaved as a signal peptide. A glycan (N-linked (GlcNAc...) asparagine) is linked at Asn-93. 3 residues coordinate Ca(2+): Asp-134, Asp-163, and Asp-167. The active site involves Arg-220. Asn-238 is a glycosylation site (N-linked (GlcNAc...) asparagine).

This sequence belongs to the polysaccharide lyase 1 family. Requires Ca(2+) as cofactor.

It localises to the secreted. It catalyses the reaction Eliminative cleavage of (1-&gt;4)-alpha-D-galacturonan to give oligosaccharides with 4-deoxy-alpha-D-galact-4-enuronosyl groups at their non-reducing ends.. Functionally, pectinolytic enzyme consist of four classes of enzymes: pectin lyase, polygalacturonase, pectin methylesterase and rhamnogalacturonase. Among pectinolytic enzymes, pectin lyase is the most important in depolymerization of pectin, since it cleaves internal glycosidic bonds of highly methylated pectins. Favors pectate, the anion, over pectin, the methyl ester. This is Probable pectate lyase A (plyA) from Neosartorya fischeri (strain ATCC 1020 / DSM 3700 / CBS 544.65 / FGSC A1164 / JCM 1740 / NRRL 181 / WB 181) (Aspergillus fischerianus).